The primary structure comprises 347 residues: Probable nitronate monooxygenase (347 aa).

Residues Asn-69, Gln-171, Gly-176, Gly-213, and 232–235 contribute to the FMN site; that span reads QIGS.

The protein belongs to the nitronate monooxygenase family. NMO class I subfamily. Requires FMN as cofactor.

The enzyme catalyses 3 propionate 3-nitronate + 3 O2 + H2O = 3 3-oxopropanoate + 2 nitrate + nitrite + H2O2 + 3 H(+). Nitronate monooxygenase that uses molecular oxygen to catalyze the oxidative denitrification of alkyl nitronates. Acts on propionate 3-nitronate (P3N), the presumed physiological substrate. Probably functions in the detoxification of P3N, a metabolic poison produced by plants and fungi as a defense mechanism. This chain is Probable nitronate monooxygenase (yrpB), found in Bacillus subtilis (strain 168).